A 26-amino-acid chain; its full sequence is Orexigenic neuropeptide 26RFa (26 aa).

The residue at position 26 (Phe-26) is a Phenylalanine amide.

In terms of tissue distribution, brain.

It localises to the secreted. Functionally, may have orexigenic activity. May promote aldosterone secretion by the adrenal gland. This is Orexigenic neuropeptide 26RFa from Pelophylax lessonae (Pool frog).